Consider the following 242-residue polypeptide: Biosynthetic peptidoglycan transglycosylase (242 aa).

The helical transmembrane segment at 19-39 threads the bilayer; it reads LMVVLAVFWGGGIALFSVAPV.

This sequence belongs to the glycosyltransferase 51 family.

Its subcellular location is the cell inner membrane. It catalyses the reaction [GlcNAc-(1-&gt;4)-Mur2Ac(oyl-L-Ala-gamma-D-Glu-L-Lys-D-Ala-D-Ala)](n)-di-trans,octa-cis-undecaprenyl diphosphate + beta-D-GlcNAc-(1-&gt;4)-Mur2Ac(oyl-L-Ala-gamma-D-Glu-L-Lys-D-Ala-D-Ala)-di-trans,octa-cis-undecaprenyl diphosphate = [GlcNAc-(1-&gt;4)-Mur2Ac(oyl-L-Ala-gamma-D-Glu-L-Lys-D-Ala-D-Ala)](n+1)-di-trans,octa-cis-undecaprenyl diphosphate + di-trans,octa-cis-undecaprenyl diphosphate + H(+). Its pathway is cell wall biogenesis; peptidoglycan biosynthesis. Its function is as follows. Peptidoglycan polymerase that catalyzes glycan chain elongation from lipid-linked precursors. In Escherichia coli (strain 55989 / EAEC), this protein is Biosynthetic peptidoglycan transglycosylase.